An 810-amino-acid chain; its full sequence is Plasminogen (810 aa).

Residues 1 to 19 form the signal peptide; sequence MQRKELVLLFLLFLQPGHG. The PAN domain maps to 20 to 98; sequence IPLDDYVTTQ…RDVILFEKKM (79 aa). Intrachain disulfides connect cysteine 49–cysteine 73, cysteine 53–cysteine 61, cysteine 103–cysteine 181, cysteine 124–cysteine 164, cysteine 152–cysteine 176, cysteine 185–cysteine 262, cysteine 188–cysteine 316, cysteine 206–cysteine 245, cysteine 234–cysteine 257, cysteine 275–cysteine 352, cysteine 296–cysteine 335, cysteine 324–cysteine 347, cysteine 379–cysteine 456, cysteine 400–cysteine 439, cysteine 428–cysteine 451, cysteine 482–cysteine 561, cysteine 503–cysteine 544, cysteine 532–cysteine 556, cysteine 569–cysteine 685, cysteine 579–cysteine 586, cysteine 607–cysteine 623, cysteine 699–cysteine 766, cysteine 729–cysteine 745, and cysteine 756–cysteine 784. 5 Kringle domains span residues 103-181, 185-262, 275-352, 379-456, and 482-561; these read CKVG…IIQC, CMHC…IPRC, CLMG…IPDC, CYQG…LKKC, and CIID…IPHC. An N-linked (GlcNAc...) asparagine glycan is attached at asparagine 339. Residues 398–418 are disordered; that stretch reads KKCQPWTSMRPHRHSKTPENY. The Peptidase S1 domain maps to 582–808; the sequence is RVGGCVAHPH…YVSWLQDVMR (227 aa). Position 598 is a phosphoserine (serine 598). Residues histidine 622 and aspartate 665 each act as charge relay system in the active site. Serine 760 serves as the catalytic Charge relay system.

This sequence belongs to the peptidase S1 family. Plasminogen subfamily. In terms of assembly, interacts with CSPG4 and AMOT. Interacts (via the Kringle domains) with HRG; the interaction tethers PLG to the cell surface and enhances its activation. Interacts (via Kringle 4 domain) with ADA; the interaction stimulates PLG activation when in complex with DPP4. Angiostatin: Interacts with ATP5F1A; the interaction inhibits most of the angiogenic effects of angiostatin. Post-translationally, in the presence of the inhibitor, the activation involves only cleavage after Arg-582, yielding two chains held together by two disulfide bonds. In the absence of the inhibitor, the activation involves additionally the removal of the activation peptide.

It localises to the secreted. The enzyme catalyses Preferential cleavage: Lys-|-Xaa &gt; Arg-|-Xaa, higher selectivity than trypsin. Converts fibrin into soluble products.. Its activity is regulated as follows. Converted into plasmin by plasminogen activators, both plasminogen and its activator being bound to fibrin. Cannot be activated with streptokinase. Its function is as follows. Plasmin dissolves the fibrin of blood clots and acts as a proteolytic factor in a variety of other processes including embryonic development, tissue remodeling, tumor invasion, and inflammation. In ovulation, weakens the walls of the Graafian follicle. It activates the urokinase-type plasminogen activator, collagenases and several complement zymogens, such as C1, C4 and C5. Cleavage of fibronectin and laminin leads to cell detachment and apoptosis. Also cleaves fibrin, thrombospondin and von Willebrand factor. Its role in tissue remodeling and tumor invasion may be modulated by CSPG4. Binds to cells. This chain is Plasminogen (PLG), found in Erinaceus europaeus (Western European hedgehog).